The sequence spans 297 residues: uncharacterized protein (297 aa).

9 helical membrane-spanning segments follow: residues 1-21 (MSWIIFYTIIAALLILDLGII), 32-52 (GSILLSLFYFIISCLFGIYVY), 72-92 (AMALDNIFIISIIFQFFNIPS), 98-118 (VLFFGIIGVIIFKAIIIYGGI), 120-140 (LIHKFSWLLYILAVILIATGI), 194-214 (ILIETIDLVFAIDSIAAIFAI), 218-238 (VYIIYTSNIFAILGLRSLFFC), 253-273 (LALILIFIGFKIFIHHYIEIP), and 274-294 (AYISLTVTISSLLFGIIASIL).

It belongs to the TerC family.

The protein localises to the cell membrane. This is an uncharacterized protein from Rickettsia prowazekii (strain Madrid E).